The chain runs to 295 residues: Bifunctional protein FolD (295 aa).

NADP(+)-binding positions include 166–168 (GRS), S195, and I236.

The protein belongs to the tetrahydrofolate dehydrogenase/cyclohydrolase family. In terms of assembly, homodimer.

It carries out the reaction (6R)-5,10-methylene-5,6,7,8-tetrahydrofolate + NADP(+) = (6R)-5,10-methenyltetrahydrofolate + NADPH. It catalyses the reaction (6R)-5,10-methenyltetrahydrofolate + H2O = (6R)-10-formyltetrahydrofolate + H(+). It functions in the pathway one-carbon metabolism; tetrahydrofolate interconversion. Functionally, catalyzes the oxidation of 5,10-methylenetetrahydrofolate to 5,10-methenyltetrahydrofolate and then the hydrolysis of 5,10-methenyltetrahydrofolate to 10-formyltetrahydrofolate. The polypeptide is Bifunctional protein FolD (Chlorobium phaeobacteroides (strain DSM 266 / SMG 266 / 2430)).